Consider the following 540-residue polypeptide: Probable feruloyl esterase B-1 (540 aa).

The N-terminal stretch at 1–18 (MLVMQLLLPFLASTAAAA) is a signal peptide. Residues asparagine 28, asparagine 49, asparagine 66, asparagine 95, asparagine 113, and asparagine 195 are each glycosylated (N-linked (GlcNAc...) asparagine). 2 disulfide bridges follow: cysteine 41/cysteine 90 and cysteine 76/cysteine 129. Intrachain disulfides connect cysteine 202–cysteine 458, cysteine 271–cysteine 288, and cysteine 297–cysteine 308. Serine 203 acts as the Acyl-ester intermediate in catalysis. An N-linked (GlcNAc...) asparagine glycan is attached at asparagine 234. Ca(2+) contacts are provided by aspartate 272, aspartate 275, alanine 277, aspartate 279, and isoleucine 281. Asparagine 298, asparagine 328, and asparagine 367 each carry an N-linked (GlcNAc...) asparagine glycan. Active-site charge relay system residues include aspartate 417 and histidine 457. Residue asparagine 506 is glycosylated (N-linked (GlcNAc...) asparagine). Cysteine 517 and cysteine 539 form a disulfide bridge.

The protein belongs to the tannase family. As to quaternary structure, homodimer.

Its subcellular location is the secreted. It carries out the reaction feruloyl-polysaccharide + H2O = ferulate + polysaccharide.. In terms of biological role, involved in degradation of plant cell walls. Hydrolyzes the feruloyl-arabinose ester bond in arabinoxylans as well as the feruloyl-galactose and feruloyl-arabinose ester bonds in pectin. This chain is Probable feruloyl esterase B-1 (faeB-1), found in Aspergillus oryzae (strain ATCC 42149 / RIB 40) (Yellow koji mold).